A 352-amino-acid chain; its full sequence is Inhibin beta C chain (352 aa).

The N-terminal stretch at 1 to 18 (MTSSLLLAFLLLAPTTVA) is a signal peptide. A propeptide spanning residues 19–236 (TPRAGGQCPA…VGGKHQIHRR (218 aa)) is cleaved from the precursor. N-linked (GlcNAc...) asparagine glycans are attached at residues Asn-110, Asn-143, and Asn-161. Intrachain disulfides connect Cys-240–Cys-248, Cys-247–Cys-317, Cys-276–Cys-349, and Cys-280–Cys-351.

This sequence belongs to the TGF-beta family. Homodimeric or heterodimeric through association with alpha and beta subunits, linked by one or more disulfide bonds. Inhibins are heterodimers of one alpha and one beta subunit. Activins are homo- or heterodimers of beta subunits only. As to expression, expressed in benign prostatic hyperplasia.

It is found in the secreted. Functionally, inhibins and activins inhibit and activate, respectively, the secretion of follitropin by the pituitary gland. Inhibins/activins are involved in regulating a number of diverse functions such as hypothalamic and pituitary hormone secretion, gonadal hormone secretion, germ cell development and maturation, erythroid differentiation, insulin secretion, nerve cell survival, embryonic axial development or bone growth, depending on their subunit composition. Inhibins appear to oppose the functions of activins. This Homo sapiens (Human) protein is Inhibin beta C chain (INHBC).